A 2102-amino-acid chain; its full sequence is Mediator of RNA polymerase II transcription subunit 13-like (2102 aa).

Disordered regions lie at residues 304–335, 432–487, 514–587, 689–758, 776–819, and 947–1034; these read SYAG…EEAQ, QRAC…QPSL, VTSS…LDPL, SSAV…TTSL, NSDE…DLHQ, and SVVE…SSVE. The segment covering 439–450 has biased composition (pro residues); that stretch reads GHPPSAGQPPQP. Residues 455-467 show a composition bias toward basic and acidic residues; sequence KMAEKLEKGDKQQ. Residues 693-714 are compositionally biased toward acidic residues; it reads CDEDPEQESDPYAFEEGDEEFN. Basic and acidic residues-rich tracts occupy residues 715 to 737 and 794 to 804; these read FSDK…REDG and AEEKFGGKEPK. Over residues 947–974 the composition is skewed to polar residues; that stretch reads SVVEQEQSCTPQTHNTFMSNSAPPSNSG. Positions 979 to 990 are enriched in low complexity; sequence PSPATPRISAPT. The span at 1015 to 1029 shows a compositional bias: polar residues; that stretch reads SDLNSPASTPSTCRP. Short sequence motifs (LXXLL motif) lie at residues 1165-1169 and 1254-1258; these read LMLLL and LRMLL. Disordered stretches follow at residues 1451–1574 and 1948–1983; these read LTQR…DGDS and NSPT…HDES. Low complexity-rich tracts occupy residues 1458 to 1467, 1476 to 1502, and 1522 to 1538; these read SSSQTSSSSS, TPTT…SSSS, and GAQG…QSAG. Over residues 1542 to 1552 the composition is skewed to polar residues; sequence DATSATSQPQV. Positions 1973–1983 are enriched in basic and acidic residues; it reads GTDRMESHDES.

This sequence belongs to the Mediator complex subunit 13 family. As to quaternary structure, component of the Mediator complex.

The protein resides in the nucleus. Its function is as follows. Component of the Mediator complex, a coactivator involved in regulated gene transcription of nearly all RNA polymerase II-dependent genes. Mediator functions as a bridge to convey information from gene-specific regulatory proteins to the basal RNA polymerase II transcription machinery. Mediator is recruited to promoters by direct interactions with regulatory proteins and serves as a scaffold for the assembly of a functional preinitiation complex with RNA polymerase II and the general transcription factors. The sequence is that of Mediator of RNA polymerase II transcription subunit 13-like from Danio rerio (Zebrafish).